The primary structure comprises 366 residues: Peptide chain release factor 2 (366 aa).

Residue Gln251 is modified to N5-methylglutamine.

Belongs to the prokaryotic/mitochondrial release factor family. Methylated by PrmC. Methylation increases the termination efficiency of RF2.

The protein resides in the cytoplasm. Functionally, peptide chain release factor 2 directs the termination of translation in response to the peptide chain termination codons UGA and UAA. The chain is Peptide chain release factor 2 (prfB) from Bacillus subtilis (strain 168).